The following is a 600-amino-acid chain: Chaperone protein DnaK (600 aa).

The residue at position 175 (Thr175) is a Phosphothreonine; by autocatalysis. A disordered region spans residues 572–600 (FAQQTQQQDPNNQKDDVTEATVTDDSTKK). The segment covering 591–600 (ATVTDDSTKK) has biased composition (polar residues).

This sequence belongs to the heat shock protein 70 family.

Functionally, acts as a chaperone. This chain is Chaperone protein DnaK, found in Ureaplasma urealyticum serovar 10 (strain ATCC 33699 / Western).